Here is a 169-residue protein sequence, read N- to C-terminus: Cell division inhibitor SulA (169 aa).

The tract at residues 106–112 (ALRTGNY) is ftsZ binding. Residues 162-169 (KIHSNLYH) are lon protease binding.

This sequence belongs to the SulA family. In terms of assembly, interacts with FtsZ. Is rapidly cleaved and degraded by the Lon protease once DNA damage is repaired.

Functionally, component of the SOS system and an inhibitor of cell division. Accumulation of SulA causes rapid cessation of cell division and the appearance of long, non-septate filaments. In the presence of GTP, binds a polymerization-competent form of FtsZ in a 1:1 ratio, thus inhibiting FtsZ polymerization and therefore preventing it from participating in the assembly of the Z ring. This mechanism prevents the premature segregation of damaged DNA to daughter cells during cell division. The polypeptide is Cell division inhibitor SulA (Shigella boydii serotype 4 (strain Sb227)).